Here is a 377-residue protein sequence, read N- to C-terminus: Copper-containing nitrite reductase (377 aa).

Positions 1 to 35 (MTNTLQMTRRTMLTGAAVAGALTPILTSGGGNASP) form a signal peptide, tat-type signal. Plastocyanin-like domains lie at 99–194 (MTFD…IMVL) and 259–360 (GAVG…FKVT). 7 residues coordinate Cu cation: His132, His137, His172, Cys173, His182, Met187, and His343.

The protein belongs to the multicopper oxidase family. Homotrimer. Cu(2+) serves as cofactor. It depends on Cu(+) as a cofactor. FAD is required as a cofactor. In terms of processing, predicted to be exported by the Tat system. The position of the signal peptide cleavage has not been experimentally proven.

It localises to the periplasm. It catalyses the reaction nitric oxide + Fe(III)-[cytochrome c] + H2O = Fe(II)-[cytochrome c] + nitrite + 2 H(+). It participates in nitrogen metabolism; nitrate reduction (denitrification); dinitrogen from nitrate: step 2/4. This Rhizobium sullae (Rhizobium hedysari) protein is Copper-containing nitrite reductase (nirK).